The sequence spans 426 residues: Serine--tRNA ligase (426 aa).

L-serine is bound at residue 233-235 (TAE). 264–266 (RSE) provides a ligand contact to ATP. Residue glutamate 287 participates in L-serine binding. 351-354 (EISS) is a binding site for ATP. Position 387 (serine 387) interacts with L-serine.

It belongs to the class-II aminoacyl-tRNA synthetase family. Type-1 seryl-tRNA synthetase subfamily. Homodimer. The tRNA molecule binds across the dimer.

It is found in the cytoplasm. It catalyses the reaction tRNA(Ser) + L-serine + ATP = L-seryl-tRNA(Ser) + AMP + diphosphate + H(+). The enzyme catalyses tRNA(Sec) + L-serine + ATP = L-seryl-tRNA(Sec) + AMP + diphosphate + H(+). The protein operates within aminoacyl-tRNA biosynthesis; selenocysteinyl-tRNA(Sec) biosynthesis; L-seryl-tRNA(Sec) from L-serine and tRNA(Sec): step 1/1. Catalyzes the attachment of serine to tRNA(Ser). Is also able to aminoacylate tRNA(Sec) with serine, to form the misacylated tRNA L-seryl-tRNA(Sec), which will be further converted into selenocysteinyl-tRNA(Sec). The protein is Serine--tRNA ligase of Pseudomonas putida (strain ATCC 700007 / DSM 6899 / JCM 31910 / BCRC 17059 / LMG 24140 / F1).